Here is a 298-residue protein sequence, read N- to C-terminus: MGIPGLEGLHTWISIPFSFMYIVAVAGNIFLIFLIMTERSLHEPMYLFLSMLASADFLLATAAAPKVLAILWFHSMDISFGSCVSQMFFIHFIFVAESAILLAMAFDRYVAICYPLRYTILTSSAVRKIGIAAVVRSFFICCPFIFLVYRLTYCGRNIIPHSYCEHIARLACGNINVNIIYGLTVALLSTGLDIVLIIISYTMILHSVFQISSWAARFKALSTCGSHICVIFMFYTPAFFSFLAHRFGGKTIPHHIHILVGSLYVLVPPMLNPIIYGVKTKQIKDRVILLFSPISVCC.

The Extracellular segment spans residues 1–14 (MGIPGLEGLHTWIS). A helical transmembrane segment spans residues 15 to 35 (IPFSFMYIVAVAGNIFLIFLI). Residues 36-43 (MTERSLHE) lie on the Cytoplasmic side of the membrane. Residues 44–64 (PMYLFLSMLASADFLLATAAA) traverse the membrane as a helical segment. At 65-85 (PKVLAILWFHSMDISFGSCVS) the chain is on the extracellular side. Cys-83 and Cys-164 are disulfide-bonded. A helical membrane pass occupies residues 86-106 (QMFFIHFIFVAESAILLAMAF). Over 107–128 (DRYVAICYPLRYTILTSSAVRK) the chain is Cytoplasmic. Residues 129–149 (IGIAAVVRSFFICCPFIFLVY) traverse the membrane as a helical segment. Residues 150 to 178 (RLTYCGRNIIPHSYCEHIARLACGNINVN) are Extracellular-facing. Residues 179–199 (IIYGLTVALLSTGLDIVLIII) traverse the membrane as a helical segment. Topologically, residues 200–223 (SYTMILHSVFQISSWAARFKALST) are cytoplasmic. Residues 224-244 (CGSHICVIFMFYTPAFFSFLA) form a helical membrane-spanning segment. The Extracellular portion of the chain corresponds to 245 to 257 (HRFGGKTIPHHIH). A helical transmembrane segment spans residues 258 to 278 (ILVGSLYVLVPPMLNPIIYGV). The Cytoplasmic segment spans residues 279–298 (KTKQIKDRVILLFSPISVCC).

It belongs to the G-protein coupled receptor 1 family.

Its subcellular location is the cell membrane. Its function is as follows. Odorant receptor. This Homo sapiens (Human) protein is Olfactory receptor 52Z1P.